The primary structure comprises 291 residues: Tyrosine recombinase XerA (291 aa).

The 94-residue stretch at 9 to 102 (PESGDLYNAF…AVRRFLKWIN (94 aa)) folds into the Core-binding (CB) domain. The Tyr recombinase domain occupies 115 to 279 (KEVKALDEIQ…VLDDLRNEYL (165 aa)). Residues R150, K175, H231, R234, and H257 contribute to the active site. The active-site O-(3'-phospho-DNA)-tyrosine intermediate is the Y266.

Belongs to the 'phage' integrase family. XerA subfamily.

It is found in the cytoplasm. In terms of biological role, site-specific tyrosine recombinase, which acts by catalyzing the cutting and rejoining of the recombining DNA molecules. Probably involved in the resolution of chromosome dimers. Binds to the dif site. This chain is Tyrosine recombinase XerA, found in Saccharolobus solfataricus (strain ATCC 35092 / DSM 1617 / JCM 11322 / P2) (Sulfolobus solfataricus).